The following is a 65-amino-acid chain: uncharacterized protein (65 aa).

Cysteine 9 functions as the Nucleophile in the catalytic mechanism. Residue arginine 15 is part of the active site.

The protein belongs to the low molecular weight phosphotyrosine protein phosphatase family.

This is an uncharacterized protein from Synechococcus sp. (strain WH8020).